A 78-amino-acid chain; its full sequence is MAKAVIRKPKKKVCQFCKEKATGVDYKDTALLRKFISDRGKIRARRVTGNCVQHQRDVAIAVKNAREVALLPYTSTGR.

The protein belongs to the bacterial ribosomal protein bS18 family. Part of the 30S ribosomal subunit. Forms a tight heterodimer with protein bS6.

In terms of biological role, binds as a heterodimer with protein bS6 to the central domain of the 16S rRNA, where it helps stabilize the platform of the 30S subunit. This Nocardioides sp. (strain ATCC BAA-499 / JS614) protein is Small ribosomal subunit protein bS18.